Here is a 170-residue protein sequence, read N- to C-terminus: Putative calmodulin-like protein 6 (170 aa).

4 EF-hand domains span residues 8-43 (QQIS…LGMA), 44-79 (PSQE…KLYE), 84-119 (DDEE…LGEE), and 120-155 (MTED…TWNI). D21, N23, D25, C27, E32, D57, D59, N61, T63, E68, D97, D99, N101, E108, D133, N135, D137, Q139, and E144 together coordinate Ca(2+).

It belongs to the calmodulin family.

Potential calcium sensor. This Oryza sativa subsp. japonica (Rice) protein is Putative calmodulin-like protein 6 (CML6).